The primary structure comprises 327 residues: Ornithine carbamoyltransferase, mitochondrial (327 aa).

Residues 63-66, R114, H141, and Q144 each bind carbamoyl phosphate; that span reads STRT. The L-ornithine site is built by N172, D236, S240, and M241. The active-site Proton acceptor is C276. Carbamoyl phosphate contacts are provided by residues 276–277 and R303; that span reads CL.

Belongs to the aspartate/ornithine carbamoyltransferase superfamily. OTCase family. Interacts with trx2.

The protein localises to the mitochondrion matrix. The enzyme catalyses carbamoyl phosphate + L-ornithine = L-citrulline + phosphate + H(+). It functions in the pathway amino-acid biosynthesis; L-arginine biosynthesis; L-arginine from L-ornithine and carbamoyl phosphate: step 1/3. Functionally, ornithine carbamoyltransferase involved in the synthesis of arginine from glutamate via ornithine and the urea cycle. The protein is Ornithine carbamoyltransferase, mitochondrial (arg3) of Schizosaccharomyces pombe (strain 972 / ATCC 24843) (Fission yeast).